Here is a 130-residue protein sequence, read N- to C-terminus: Small ribosomal subunit protein uS9 (130 aa).

Belongs to the universal ribosomal protein uS9 family.

This is Small ribosomal subunit protein uS9 from Geobacillus sp. (strain WCH70).